Here is a 166-residue protein sequence, read N- to C-terminus: Lithostathine-1-alpha (166 aa).

The signal sequence occupies residues 1 to 22; sequence MAQTSSYFMLISCLMFLSQSQG. Q23 carries the pyrrolidone carboxylic acid modification. A glycan (O-linked (GalNAc) threonine) is linked at T27. The C-type lectin domain occupies 34–164; sequence ISCPEGTNAY…EDKFSFVCKF (131 aa). Disulfide bonds link C36/C47, C64/C162, and C137/C154.

In terms of processing, the composition of the O-linked carbohydrate on Thr-27 is complex and varied. In the crystallographic structure, the attached sugar appears to be N-acetylglucosamine, typical of an intracellular protein, rather than N-acetylgalactosamine. In pancreatic acinar cells and, in lower levels, in brain. Enhanced expression of PSP-related transcripts and intraneuronal accumulation of PSP-like proteins is found in brain from Alzheimer disease and Down syndrome patients.

The protein localises to the secreted. In terms of biological role, might act as an inhibitor of spontaneous calcium carbonate precipitation. May be associated with neuronal sprouting in brain, and with brain and pancreas regeneration. This chain is Lithostathine-1-alpha (REG1A), found in Homo sapiens (Human).